Consider the following 330-residue polypeptide: Ketol-acid reductoisomerase (NADP(+)) (330 aa).

Residues 2-182 (ARLYYDTDAN…GGTRAGILET (181 aa)) enclose the KARI N-terminal Rossmann domain. NADP(+)-binding positions include 25–28 (YGSQ), Ser51, Ser53, and 83–86 (DEVQ). Residue His108 is part of the active site. NADP(+) is bound at residue Gly134. Residues 183–328 (TFREETETDL…RELRAMFSWL (146 aa)) enclose the KARI C-terminal knotted domain. Mg(2+) is bound by residues Asp191, Glu195, Glu227, and Glu231. Substrate is bound at residue Ser252.

This sequence belongs to the ketol-acid reductoisomerase family. Mg(2+) is required as a cofactor.

It carries out the reaction (2R)-2,3-dihydroxy-3-methylbutanoate + NADP(+) = (2S)-2-acetolactate + NADPH + H(+). The enzyme catalyses (2R,3R)-2,3-dihydroxy-3-methylpentanoate + NADP(+) = (S)-2-ethyl-2-hydroxy-3-oxobutanoate + NADPH + H(+). Its pathway is amino-acid biosynthesis; L-isoleucine biosynthesis; L-isoleucine from 2-oxobutanoate: step 2/4. The protein operates within amino-acid biosynthesis; L-valine biosynthesis; L-valine from pyruvate: step 2/4. Involved in the biosynthesis of branched-chain amino acids (BCAA). Catalyzes an alkyl-migration followed by a ketol-acid reduction of (S)-2-acetolactate (S2AL) to yield (R)-2,3-dihydroxy-isovalerate. In the isomerase reaction, S2AL is rearranged via a Mg-dependent methyl migration to produce 3-hydroxy-3-methyl-2-ketobutyrate (HMKB). In the reductase reaction, this 2-ketoacid undergoes a metal-dependent reduction by NADPH to yield (R)-2,3-dihydroxy-isovalerate. The chain is Ketol-acid reductoisomerase (NADP(+)) from Synechococcus sp. (strain JA-2-3B'a(2-13)) (Cyanobacteria bacterium Yellowstone B-Prime).